Here is a 365-residue protein sequence, read N- to C-terminus: MLKTQEISINVGPQHPSTHGVFRIILKLDGETIVDAEPVVGYLHRGIEKLAEDRTYTQVIPYTDRMDYLGAMSYNLGYVQAIEKLMGIEVPERAEFIRVIATELSRIASHHVFLASMSLDMGSYTGWMYPFRDRELVLELLEMLTGSRMTFSFMRIGGVADDLPEGFIEKAKEYLPKILDGVDEEEGLLAGNEIFLARTKGLAPVSVEKALAWGWGGVNLRASGYKFDLRKNRPYSVYDRFEFDIPTGANGDCWDRFYLRLAEIRQSVKIIEQALEMIPEGPIMAKVPKVIKPPVGEVYHEVEAPKGILGYYVVSDGSTKPYRMHVRRPSFINIGMLKELLIGTKLADFITIFASIDVVLGDVDC.

This sequence belongs to the complex I 49 kDa subunit family. In terms of assembly, NDH-1 is composed of 14 different subunits. Subunits NuoB, C, D, E, F, and G constitute the peripheral sector of the complex.

The protein localises to the cell membrane. It carries out the reaction a quinone + NADH + 5 H(+)(in) = a quinol + NAD(+) + 4 H(+)(out). NDH-1 shuttles electrons from NADH, via FMN and iron-sulfur (Fe-S) centers, to quinones in the respiratory chain. The immediate electron acceptor for the enzyme in this species is believed to be a menaquinone. Couples the redox reaction to proton translocation (for every two electrons transferred, four hydrogen ions are translocated across the cytoplasmic membrane), and thus conserves the redox energy in a proton gradient. The polypeptide is NADH-quinone oxidoreductase subunit D (Carboxydothermus hydrogenoformans (strain ATCC BAA-161 / DSM 6008 / Z-2901)).